Here is a 344-residue protein sequence, read N- to C-terminus: uncharacterized protein (344 aa).

Basic and acidic residues predominate over residues 323–332; the sequence is KQQEQREQGR. The segment at 323–344 is disordered; it reads KQQEQREQGRRAAYLQQRGMER.

This is an uncharacterized protein from Bacillus anthracis.